Reading from the N-terminus, the 431-residue chain is 5-methylthioadenosine/S-adenosylhomocysteine deaminase (431 aa).

Positions 60 and 62 each coordinate Zn(2+). Substrate-binding residues include E89 and H182. Position 209 (H209) interacts with Zn(2+). Substrate-binding residues include E212 and D297. D297 provides a ligand contact to Zn(2+).

Belongs to the metallo-dependent hydrolases superfamily. MTA/SAH deaminase family. The cofactor is Zn(2+).

It catalyses the reaction S-adenosyl-L-homocysteine + H2O + H(+) = S-inosyl-L-homocysteine + NH4(+). The enzyme catalyses S-methyl-5'-thioadenosine + H2O + H(+) = S-methyl-5'-thioinosine + NH4(+). Functionally, catalyzes the deamination of 5-methylthioadenosine and S-adenosyl-L-homocysteine into 5-methylthioinosine and S-inosyl-L-homocysteine, respectively. Is also able to deaminate adenosine. The chain is 5-methylthioadenosine/S-adenosylhomocysteine deaminase from Natronomonas pharaonis (strain ATCC 35678 / DSM 2160 / CIP 103997 / JCM 8858 / NBRC 14720 / NCIMB 2260 / Gabara) (Halobacterium pharaonis).